Here is a 598-residue protein sequence, read N- to C-terminus: DNA ligase (598 aa).

Aspartate 258 is a binding site for ATP. The active-site N6-AMP-lysine intermediate is lysine 260. ATP is bound by residues arginine 265, arginine 280, glutamate 310, phenylalanine 350, arginine 427, and lysine 433.

This sequence belongs to the ATP-dependent DNA ligase family. Requires Mg(2+) as cofactor.

It catalyses the reaction ATP + (deoxyribonucleotide)n-3'-hydroxyl + 5'-phospho-(deoxyribonucleotide)m = (deoxyribonucleotide)n+m + AMP + diphosphate.. Its function is as follows. DNA ligase that seals nicks in double-stranded DNA during DNA replication, DNA recombination and DNA repair. The sequence is that of DNA ligase from Sulfolobus acidocaldarius (strain ATCC 33909 / DSM 639 / JCM 8929 / NBRC 15157 / NCIMB 11770).